The following is a 346-amino-acid chain: Anthranilate phosphoribosyltransferase (346 aa).

5-phospho-alpha-D-ribose 1-diphosphate contacts are provided by residues Gly-81, 84–85 (GD), 91–94 (NVST), 109–117 (KHGNRSVSS), and Ser-121. Residue Gly-81 participates in anthranilate binding. Ser-93 contacts Mg(2+). Asn-112 is a binding site for anthranilate. Residue Arg-167 participates in anthranilate binding. The Mg(2+) site is built by Asp-226 and Glu-227.

This sequence belongs to the anthranilate phosphoribosyltransferase family. Homodimer. Mg(2+) is required as a cofactor.

The enzyme catalyses N-(5-phospho-beta-D-ribosyl)anthranilate + diphosphate = 5-phospho-alpha-D-ribose 1-diphosphate + anthranilate. It functions in the pathway amino-acid biosynthesis; L-tryptophan biosynthesis; L-tryptophan from chorismate: step 2/5. Its function is as follows. Catalyzes the transfer of the phosphoribosyl group of 5-phosphorylribose-1-pyrophosphate (PRPP) to anthranilate to yield N-(5'-phosphoribosyl)-anthranilate (PRA). The polypeptide is Anthranilate phosphoribosyltransferase (Hahella chejuensis (strain KCTC 2396)).